We begin with the raw amino-acid sequence, 386 residues long: Succinate--CoA ligase [ADP-forming] subunit beta (386 aa).

Residues 9–244 (KEVLRKYGVV…LDEEDADEIE (236 aa)) enclose the ATP-grasp domain. Residues Lys46, 53 to 55 (GRG), Glu99, Ala102, and Glu107 contribute to the ATP site. Positions 199 and 213 each coordinate Mg(2+). Residues Asn264 and 321–323 (GIM) contribute to the substrate site.

Belongs to the succinate/malate CoA ligase beta subunit family. In terms of assembly, heterotetramer of two alpha and two beta subunits. It depends on Mg(2+) as a cofactor.

The catalysed reaction is succinate + ATP + CoA = succinyl-CoA + ADP + phosphate. It carries out the reaction GTP + succinate + CoA = succinyl-CoA + GDP + phosphate. The protein operates within carbohydrate metabolism; tricarboxylic acid cycle; succinate from succinyl-CoA (ligase route): step 1/1. Succinyl-CoA synthetase functions in the citric acid cycle (TCA), coupling the hydrolysis of succinyl-CoA to the synthesis of either ATP or GTP and thus represents the only step of substrate-level phosphorylation in the TCA. The beta subunit provides nucleotide specificity of the enzyme and binds the substrate succinate, while the binding sites for coenzyme A and phosphate are found in the alpha subunit. This is Succinate--CoA ligase [ADP-forming] subunit beta from Azoarcus sp. (strain BH72).